A 400-amino-acid chain; its full sequence is Beta-ketoadipyl-CoA thiolase (400 aa).

Cys-90 functions as the Acyl-thioester intermediate in the catalytic mechanism. Active-site proton acceptor residues include His-356 and Cys-386.

Belongs to the thiolase-like superfamily. Thiolase family.

It catalyses the reaction succinyl-CoA + acetyl-CoA = 3-oxoadipyl-CoA + CoA. It functions in the pathway aromatic compound metabolism; beta-ketoadipate pathway; acetyl-CoA and succinyl-CoA from 3-oxoadipate: step 2/2. Catalyzes thiolytic cleavage of beta-ketoadipyl-CoA to succinyl-CoA and acetyl-CoA. In Pseudomonas putida (Arthrobacter siderocapsulatus), this protein is Beta-ketoadipyl-CoA thiolase (pcaF).